The following is a 233-amino-acid chain: MTPHINAKIGDFHPQCILCGDPLRVSYIAKNFLQDAREITNVRNMLGFSGKYKGKEISLMGHGMGIASCTIYVTELVKTYQVKELLRIGTCGAISPKVGLRDIIMVTGASTDSKTNRIRFLNHDLSATPDFELSLRAYQTAKRLEIDLKVGNIFTSDFFYSFETHAFDLLAKYNHLGIEMEAAGLYATAMELSAKALCLCSVSDHLITKEALSPKERIESFNNMIILALEMMG.

A purine D-ribonucleoside is bound at residue His4. Phosphate is bound by residues Gly20, Arg24, Arg43, and 87–90; that span reads RIGT. A purine D-ribonucleoside contacts are provided by residues 179–181 and 203–204; these read EME and SD. Residue Asp204 is the Proton donor of the active site.

Belongs to the PNP/UDP phosphorylase family. In terms of assembly, homohexamer; trimer of homodimers.

It carries out the reaction a purine D-ribonucleoside + phosphate = a purine nucleobase + alpha-D-ribose 1-phosphate. It catalyses the reaction a purine 2'-deoxy-D-ribonucleoside + phosphate = a purine nucleobase + 2-deoxy-alpha-D-ribose 1-phosphate. In terms of biological role, catalyzes the reversible phosphorolytic breakdown of the N-glycosidic bond in the beta-(deoxy)ribonucleoside molecules, with the formation of the corresponding free purine bases and pentose-1-phosphate. In Helicobacter acinonychis (strain Sheeba), this protein is Purine nucleoside phosphorylase DeoD-type.